Here is a 1144-residue protein sequence, read N- to C-terminus: Alpha-mannosidase 2 (1144 aa).

Residues 1 to 5 (MKLSR) are Cytoplasmic-facing. A helical; Signal-anchor for type II membrane protein membrane pass occupies residues 6-26 (QFTVFGSAIFCVVIFSLYLML). At 27–1144 (DRGHLDYPRN…EISTFRIQLR (1118 aa)) the chain is on the lumenal side. N-linked (GlcNAc...) asparagine glycosylation occurs at Asn-78. 2 positions are modified to phosphoserine: Ser-80 and Ser-82. An N-linked (GlcNAc...) asparagine glycan is attached at Asn-93. Residues His-175, Asp-177, Asp-289, and His-569 each coordinate Zn(2+). The Nucleophile role is filled by Asp-289. Asn-1125 carries an N-linked (GlcNAc...) asparagine glycan.

The protein belongs to the glycosyl hydrolase 38 family. As to quaternary structure, homodimer; disulfide-linked. The cofactor is Zn(2+). Glycosylated.

It is found in the golgi apparatus membrane. The catalysed reaction is N(4)-{beta-D-GlcNAc-(1-&gt;2)-alpha-D-Man-(1-&gt;3)-[alpha-D-Man-(1-&gt;3)-[alpha-D-Man-(1-&gt;6)]-alpha-D-Man-(1-&gt;6)]-beta-D-Man-(1-&gt;4)-beta-D-GlcNAc-(1-&gt;4)-beta-D-GlcNAc}-L-asparaginyl-[protein] + 2 H2O = 2 alpha-D-mannopyranose + an N(4)-{beta-D-GlcNAc-(1-&gt;2)-alpha-D-Man-(1-&gt;3)-[alpha-D-Man-(1-&gt;6)]-beta-D-Man-(1-&gt;4)-beta-D-GlcNAc-(1-&gt;4)-beta-D-GlcNAc}-L-asparaginyl-[protein]. It functions in the pathway protein modification; protein glycosylation. Catalyzes the first committed step in the biosynthesis of complex N-glycans. It controls conversion of high mannose to complex N-glycans; the final hydrolytic step in the N-glycan maturation pathway. The chain is Alpha-mannosidase 2 (MAN2A1) from Homo sapiens (Human).